We begin with the raw amino-acid sequence, 132 residues long: Ribosome-binding factor A (132 aa).

The protein belongs to the RbfA family. Monomer. Binds 30S ribosomal subunits, but not 50S ribosomal subunits or 70S ribosomes.

The protein resides in the cytoplasm. Functionally, one of several proteins that assist in the late maturation steps of the functional core of the 30S ribosomal subunit. Associates with free 30S ribosomal subunits (but not with 30S subunits that are part of 70S ribosomes or polysomes). Required for efficient processing of 16S rRNA. May interact with the 5'-terminal helix region of 16S rRNA. This Rhizorhabdus wittichii (strain DSM 6014 / CCUG 31198 / JCM 15750 / NBRC 105917 / EY 4224 / RW1) (Sphingomonas wittichii) protein is Ribosome-binding factor A.